Here is a 41-residue protein sequence, read N- to C-terminus: Photosystem II reaction center protein J (41 aa).

The helical transmembrane segment at 9 to 29 (IPLWFVGMVGGLAALGLLAIF) threads the bilayer.

It belongs to the PsbJ family. In terms of assembly, PSII is composed of 1 copy each of membrane proteins PsbA, PsbB, PsbC, PsbD, PsbE, PsbF, PsbH, PsbI, PsbJ, PsbK, PsbL, PsbM, PsbT, PsbX, PsbY, PsbZ, Psb30/Ycf12, at least 3 peripheral proteins of the oxygen-evolving complex and a large number of cofactors. It forms dimeric complexes.

Its subcellular location is the plastid. It is found in the chloroplast thylakoid membrane. One of the components of the core complex of photosystem II (PSII). PSII is a light-driven water:plastoquinone oxidoreductase that uses light energy to abstract electrons from H(2)O, generating O(2) and a proton gradient subsequently used for ATP formation. It consists of a core antenna complex that captures photons, and an electron transfer chain that converts photonic excitation into a charge separation. The polypeptide is Photosystem II reaction center protein J (Ostreococcus tauri).